The chain runs to 254 residues: Activity-regulated cytoskeleton associated protein 1 (254 aa).

Belongs to the ARC/ARG3.1 family. In terms of assembly, homooligomer; homooligomerizes into virion-like capsids. In terms of tissue distribution, expressed in a specific population of brain neurons, named E347, that are necessary and sufficient for proper body fat storage.

The protein resides in the extracellular vesicle membrane. Its subcellular location is the synapse. In terms of biological role, master regulator of synaptic plasticity that self-assembles into virion-like capsids that encapsulate RNAs and mediate intercellular RNA transfer from motorneurons to muscles. Arc1 protein is released from motorneurons in extracellular vesicles that mediate the transfer of Arc1 mRNA into muscle cells, where Arc1 mRNA can undergo activity-dependent translation. Intercellular transfer od Arc1 mRNA is required for synaptic plasticity at the neuromuscular junction. May play a role in energy balance: required for regulation of body fat by a specific population of brain neurons, named E347, that are necessary and sufficient for proper body fat storage. This Drosophila melanogaster (Fruit fly) protein is Activity-regulated cytoskeleton associated protein 1.